We begin with the raw amino-acid sequence, 714 residues long: GATA zinc finger domain-containing protein 10 (714 aa).

6 disordered regions span residues 28–97 (YIQQ…NKQI), 115–180 (TMPH…QQQQ), 266–362 (MPMN…QQQQ), 394–419 (QQQQQQPQYHNGMPHHMQQHSPESMD), 454–476 (MHLQQQQQNQQNQQIQQQHQQIQ), and 528–621 (IQQQ…RRRT). 2 stretches are compositionally biased toward low complexity: residues 30–94 (QQQQ…NNNN) and 130–147 (QQQQQQQQQHYQQQQHPH). Positions 148-168 (QQQHPHQQQHPHQQQHPHQQQ) are enriched in basic residues. Over residues 169-180 (HPHQQQIQQQQQ) the composition is skewed to low complexity. A compositionally biased stretch (polar residues) spans 271–282 (GGNSRKNSFDMY). Low complexity-rich tracts occupy residues 283 to 322 (NNNNNNNNNNNINNNNNNNNNNNINNNNNNNNNNNNNNNI) and 340 to 362 (QHQQQHQQQQHQQQHQQQHQQQQ). 2 stretches are compositionally biased toward low complexity: residues 457–476 (QQQQQNQQNQQIQQQHQQIQ) and 528–549 (IQQQQQSIAKQQMPQQQNTPNN). Residues 550–569 (GSPSSSDGKSPVNSNTAITS) show a composition bias toward polar residues. Positions 570–588 (NNNNNNNNNNNNNNNNNNN) are enriched in low complexity. Residues 631–656 (CHYCEVTETPEWRRGPDGDHTLCNAC) form a GATA-type zinc finger. Residues 661 to 694 (AKSQKKLAREKELEKQKELEREKERENTRKHSID) are a coiled coil. Positions 667-693 (LAREKELEKQKELEREKERENTRKHSI) are enriched in basic and acidic residues. The interval 667-714 (LAREKELEKQKELEREKERENTRKHSIDFMLMNDTSSAPTNSQNPTPN) is disordered. The segment covering 699 to 714 (NDTSSAPTNSQNPTPN) has biased composition (polar residues).

The polypeptide is GATA zinc finger domain-containing protein 10 (gtaJ) (Dictyostelium discoideum (Social amoeba)).